We begin with the raw amino-acid sequence, 117 residues long: MKHRIGRVETQIQREVDDILLKDVNDPRVKGVTITGVKLTGDLQHATIFYSILDDAPDKVEAAQTGLDKASGLIRREVGQRIRLFKVPEIEFAQDKSVQYGARIDQLINEVRRKNLE.

Belongs to the RbfA family. As to quaternary structure, monomer. Binds 30S ribosomal subunits, but not 50S ribosomal subunits or 70S ribosomes.

It localises to the cytoplasm. Functionally, one of several proteins that assist in the late maturation steps of the functional core of the 30S ribosomal subunit. Associates with free 30S ribosomal subunits (but not with 30S subunits that are part of 70S ribosomes or polysomes). Required for efficient processing of 16S rRNA. May interact with the 5'-terminal helix region of 16S rRNA. This chain is Ribosome-binding factor A, found in Lacticaseibacillus casei (strain BL23) (Lactobacillus casei).